A 133-amino-acid polypeptide reads, in one-letter code: Small ribosomal subunit protein uS8 (133 aa).

It belongs to the universal ribosomal protein uS8 family. As to quaternary structure, part of the 30S ribosomal subunit. Contacts proteins S5 and S12.

One of the primary rRNA binding proteins, it binds directly to 16S rRNA central domain where it helps coordinate assembly of the platform of the 30S subunit. In Anaplasma phagocytophilum (strain HZ), this protein is Small ribosomal subunit protein uS8.